The sequence spans 100 residues: Urease subunit gamma (100 aa).

Belongs to the urease gamma subunit family. In terms of assembly, heterotrimer of UreA (gamma), UreB (beta) and UreC (alpha) subunits. Three heterotrimers associate to form the active enzyme.

It localises to the cytoplasm. It catalyses the reaction urea + 2 H2O + H(+) = hydrogencarbonate + 2 NH4(+). Its pathway is nitrogen metabolism; urea degradation; CO(2) and NH(3) from urea (urease route): step 1/1. The sequence is that of Urease subunit gamma from Streptomyces griseus subsp. griseus (strain JCM 4626 / CBS 651.72 / NBRC 13350 / KCC S-0626 / ISP 5235).